We begin with the raw amino-acid sequence, 156 residues long: Guanine deaminase (156 aa).

A CMP/dCMP-type deaminase domain is found at 1 to 132; that stretch reads MNHETFLKRA…KPAEERTIPF (132 aa). Position 53 (histidine 53) interacts with Zn(2+). Glutamate 55 (proton donor) is an active-site residue. 2 residues coordinate Zn(2+): cysteine 83 and cysteine 86.

The protein belongs to the cytidine and deoxycytidylate deaminase family. The cofactor is Zn(2+).

The catalysed reaction is guanine + H2O + H(+) = xanthine + NH4(+). Its pathway is purine metabolism; guanine degradation; xanthine from guanine: step 1/1. Functionally, catalyzes the hydrolytic deamination of guanine, producing xanthine and ammonia. The protein is Guanine deaminase (guaD) of Bacillus subtilis (strain 168).